A 308-amino-acid polypeptide reads, in one-letter code: MAAITASMVAELRGKTDAPMMECKKALTEAGGDMAKAEELLRIKLGTKAGKAAARITAEGVVACHIDGTRGALIEVNSETDFVSKNDSFLQLARAAAELVARHQPADIAALGALAYEQDGFGPTLEDVRKGLIGKIGENMVLRRFRYFGAGHRLVSYLHGTRIGVVVEFDGDATVAKDVAMHIAAMKPVALSSAGVPAELIAAERSVAAAKAAEDKARAEAEGRPVQSDDIVAKRIEGAVHKYLKDVALFNQAFVKNDKQTVEQVLKAAGTTVKGFALYVVGEGMEKKVDDFAAEVAAQVAAAKAAVT.

Residues 80 to 83 (TDFV) form an involved in Mg(2+) ion dislocation from EF-Tu region.

The protein belongs to the EF-Ts family.

The protein resides in the cytoplasm. Associates with the EF-Tu.GDP complex and induces the exchange of GDP to GTP. It remains bound to the aminoacyl-tRNA.EF-Tu.GTP complex up to the GTP hydrolysis stage on the ribosome. This is Elongation factor Ts from Verminephrobacter eiseniae (strain EF01-2).